The following is a 170-amino-acid chain: Myosin regulatory light chain 11 (170 aa).

A N,N,N-trimethylalanine modification is found at Ala-2. A phosphoserine mark is found at Ser-16 and Ser-17. A phosphothreonine mark is found at Thr-26 and Thr-36. Residues 26 to 61 (TQIQEFKEAFTVIDQNRDGIIDKEDLRDTFAAMGRL) enclose the EF-hand 1 domain. Asp-39, Asn-41, Asp-43, and Asp-50 together coordinate Ca(2+). Ser-76 is subject to Phosphoserine. EF-hand domains are found at residues 96–131 (DPEDVITGAFKVLDPEGKGTIKKQFLEELLTTQCDR) and 132–167 (FSQEEIKNMWAAFPPDVGGNVDYKNICYVITHGDAK). Thr-102 carries the phosphothreonine modification.

As to quaternary structure, myosin is a hexamer of 2 heavy chains and 4 light chains. In terms of processing, n,N,N-trimethylalanine found in this myosin light chain would not have been detected in the N-terminal tryptic peptide in PubMed:863872 and PubMed:352892 because it would remain trimethylated and ninhydrin negative after hydrolysis.

Its function is as follows. Myosin regulatory subunit that plays an essential role to maintain muscle integrity during early development. Plays a role in muscle contraction. This chain is Myosin regulatory light chain 11 (MYL11), found in Oryctolagus cuniculus (Rabbit).